A 387-amino-acid polypeptide reads, in one-letter code: Chaperone protein DnaJ (387 aa).

One can recognise a J domain in the interval Asp4–Gly68. Residues Glu76–Gln135 are disordered. The span at Gly80–Ser105 shows a compositional bias: gly residues. Residues Gln121–Asn133 are compositionally biased toward low complexity. Residues Gly148 to Glu230 form a CR-type zinc finger. Zn(2+)-binding residues include Cys161, Cys164, Cys178, Cys181, Cys204, Cys207, Cys218, and Cys221. 4 CXXCXGXG motif repeats span residues Cys161–Gly168, Cys178–Gly185, Cys204–Gly211, and Cys218–Gly225.

It belongs to the DnaJ family. In terms of assembly, homodimer. The cofactor is Zn(2+).

It localises to the cytoplasm. In terms of biological role, participates actively in the response to hyperosmotic and heat shock by preventing the aggregation of stress-denatured proteins and by disaggregating proteins, also in an autonomous, DnaK-independent fashion. Unfolded proteins bind initially to DnaJ; upon interaction with the DnaJ-bound protein, DnaK hydrolyzes its bound ATP, resulting in the formation of a stable complex. GrpE releases ADP from DnaK; ATP binding to DnaK triggers the release of the substrate protein, thus completing the reaction cycle. Several rounds of ATP-dependent interactions between DnaJ, DnaK and GrpE are required for fully efficient folding. Also involved, together with DnaK and GrpE, in the DNA replication of plasmids through activation of initiation proteins. The polypeptide is Chaperone protein DnaJ (Haloquadratum walsbyi (strain DSM 16790 / HBSQ001)).